A 456-amino-acid chain; its full sequence is ATP-dependent protease ATPase subunit HslU (456 aa).

Residues isoleucine 18, 60 to 65 (GVGKTE), aspartate 270, glutamate 334, and arginine 406 each bind ATP.

It belongs to the ClpX chaperone family. HslU subfamily. As to quaternary structure, a double ring-shaped homohexamer of HslV is capped on each side by a ring-shaped HslU homohexamer. The assembly of the HslU/HslV complex is dependent on binding of ATP.

Its subcellular location is the cytoplasm. ATPase subunit of a proteasome-like degradation complex; this subunit has chaperone activity. The binding of ATP and its subsequent hydrolysis by HslU are essential for unfolding of protein substrates subsequently hydrolyzed by HslV. HslU recognizes the N-terminal part of its protein substrates and unfolds these before they are guided to HslV for hydrolysis. The polypeptide is ATP-dependent protease ATPase subunit HslU (Exiguobacterium sibiricum (strain DSM 17290 / CCUG 55495 / CIP 109462 / JCM 13490 / 255-15)).